The sequence spans 1623 residues: Histone-lysine N-methyltransferase set-9 (1623 aa).

5 disordered regions span residues 1–102 (MADG…APQQ), 112–131 (AADA…RPTE), 198–227 (EDAV…SVAS), 448–600 (QRPG…VLRP), and 645–781 (TGQS…DEAA). Basic and acidic residues predominate over residues 62-71 (HQMENQEFYH). Low complexity predominate over residues 77 to 100 (EPQQIPQIPVFQPAAYNPPNYVAP). Polar residues predominate over residues 206-227 (PGTQYRRNQQAGGGLPSTSVAS). The segment covering 554-573 (MTQEEKNAHFARLTTDKEKP) has biased composition (basic and acidic residues). Residues 587–597 (PHVPPPPPPLV) show a composition bias toward pro residues. Polar residues predominate over residues 645–669 (TGQSGSSAAARQRTVSGSAARAQTY). A compositionally biased stretch (basic residues) spans 723–733 (HRPRGRPKGTR). Residues 772–781 (SESEGIDEAA) show a composition bias toward acidic residues. A PHD-type zinc finger spans residues 786–834 (TMRCHCGMDHGDGDTIECEGCKTWQHMACMGLTLKSNTSKYKCEMCLPR). The tract at residues 857–895 (AARKQKRKSEPVEQKQKSSQPSTSRKSAPMALQQPAEPR) is disordered. Residues 873-882 (KSSQPSTSRK) show a composition bias toward polar residues. An SET domain is found at 965–1056 (MSSEVKRQPG…RNTEVTLPFD (92 aa)). Basic and acidic residues-rich tracts occupy residues 1089-1157 (AERH…KKME) and 1172-1194 (AREE…EGKR). Disordered regions lie at residues 1089 to 1318 (AERH…NVAP) and 1356 to 1623 (LLAG…TRWN). Positions 1093 to 1201 (RAMDHKKQEA…GKRKEARRRS (109 aa)) form a coiled coil. A compositionally biased stretch (polar residues) spans 1242–1252 (TTQPSTSSFAT). The span at 1282-1293 (ATTVATPKATTA) shows a compositional bias: low complexity. A coiled-coil region spans residues 1364–1401 (FSEVRAQIEEENRMKERSRKREAKKKAVEKEKKEHRKE). Basic and acidic residues-rich tracts occupy residues 1365–1378 (SEVR…NRMK), 1388–1406 (KKAV…KKTN), 1413–1429 (KSEK…EKKP), and 1447–1464 (KKTE…ESSS). Positions 1533-1544 (SSSNTAPTTTIA) are enriched in polar residues.

This sequence belongs to the class V-like SAM-binding methyltransferase superfamily. Predominantly expressed in the germline (at protein level).

It localises to the nucleus. It catalyses the reaction L-lysyl-[histone] + S-adenosyl-L-methionine = N(6)-methyl-L-lysyl-[histone] + S-adenosyl-L-homocysteine + H(+). Histone methyltransferase. Might play a role in transcriptional regulation. Together with set-26, negatively regulates lifespan in a germline-independent, partially daf-16-dependent fashion. Together with set-26, plays a role in germline development and maintenance and might play a role in the restriction of the trimethylation mark on histone H3 'Lys-4'(H3K4me3) to target genes specifically in the germline. The protein is Histone-lysine N-methyltransferase set-9 of Caenorhabditis elegans.